Consider the following 370-residue polypeptide: 3-dehydroquinate synthase (370 aa).

Residues 112–116, 136–137, Lys149, Lys158, and 176–179 contribute to the NAD(+) site; these read GVVGD, TS, and TLRT. 3 residues coordinate Zn(2+): Glu191, His254, and His276.

It belongs to the sugar phosphate cyclases superfamily. Dehydroquinate synthase family. Co(2+) is required as a cofactor. The cofactor is Zn(2+). It depends on NAD(+) as a cofactor.

The protein resides in the cytoplasm. The enzyme catalyses 7-phospho-2-dehydro-3-deoxy-D-arabino-heptonate = 3-dehydroquinate + phosphate. The protein operates within metabolic intermediate biosynthesis; chorismate biosynthesis; chorismate from D-erythrose 4-phosphate and phosphoenolpyruvate: step 2/7. Catalyzes the conversion of 3-deoxy-D-arabino-heptulosonate 7-phosphate (DAHP) to dehydroquinate (DHQ). The chain is 3-dehydroquinate synthase from Xanthomonas campestris pv. campestris (strain 8004).